The primary structure comprises 289 residues: Homoserine kinase (289 aa).

Position 79–89 (79–89) interacts with ATP; it reads PLARGLGSSSS.

This sequence belongs to the GHMP kinase family. Homoserine kinase subfamily.

It localises to the cytoplasm. The catalysed reaction is L-homoserine + ATP = O-phospho-L-homoserine + ADP + H(+). The protein operates within amino-acid biosynthesis; L-threonine biosynthesis; L-threonine from L-aspartate: step 4/5. Its function is as follows. Catalyzes the ATP-dependent phosphorylation of L-homoserine to L-homoserine phosphate. This is Homoserine kinase from Streptococcus pneumoniae serotype 2 (strain D39 / NCTC 7466).